A 579-amino-acid chain; its full sequence is Protein PLASTID MOVEMENT IMPAIRED 15 (579 aa).

Coiled-coil stretches lie at residues 90 to 161 (EVLK…NEEH), 188 to 216 (KVLD…IEIE), 383 to 419 (QKTK…KLES), and 481 to 501 (LMKT…EERE).

Belongs to the WEB family.

Required for the chloroplast avoidance response under high intensity blue light. This avoidance response consists in the relocation of chloroplasts on the anticlinal side of exposed cells. The sequence is that of Protein PLASTID MOVEMENT IMPAIRED 15 (PMI15) from Arabidopsis thaliana (Mouse-ear cress).